The primary structure comprises 596 residues: Arginine--tRNA ligase (596 aa).

A 'HIGH' region motif is present at residues 135 to 145; the sequence is ANPTGPIHIGG. The disordered stretch occupies residues 227 to 249; the sequence is PRVDGGADQDGNPLGEGDSEQRE.

It belongs to the class-I aminoacyl-tRNA synthetase family. As to quaternary structure, monomer.

The protein localises to the cytoplasm. It carries out the reaction tRNA(Arg) + L-arginine + ATP = L-arginyl-tRNA(Arg) + AMP + diphosphate. In Bifidobacterium adolescentis (strain ATCC 15703 / DSM 20083 / NCTC 11814 / E194a), this protein is Arginine--tRNA ligase.